A 249-amino-acid polypeptide reads, in one-letter code: Receptor-transporting protein 4 (249 aa).

The Cytoplasmic segment spans residues 1 to 227 (MLFPDDFSTW…QGCREPPQRE (227 aa)). The 3CxxC-type zinc finger occupies 50-162 (TVLGRFQCSR…DTRNCEACSL (113 aa)). The segment at 173 to 208 (KVKPPRSPSPLPKSSSPSKSCPPPPQTRNTDFGNKT) is disordered. The segment covering 199 to 208 (TRNTDFGNKT) has biased composition (polar residues). Residues 228-248 (IEPPLFLFLSIAAFALFSLFT) form a helical membrane-spanning segment.

Belongs to the TMEM7 family. Interacts with TASR16. Interacts with OPRD1 and OPRM1; the interaction promotes cell surface localization of the OPDR1-OPRM1 heterodimer. In terms of tissue distribution, expressed at low levels in olfactory neurons. Upon viral infection, highly expressed in brain and different cells of nervous tissue.

It is found in the membrane. It localises to the cytoplasm. In terms of biological role, chaperone protein that facilitates the trafficking and functional cell surface expression of some G-protein coupled receptors (GPCRs). Promotes functional expression of the bitter taste receptor TAS2R16. Also promotes functional expression of the opioid receptor heterodimer OPRD1-OPRM1. In addition, acts as a potent IFN-inducible suppressor of pathogens including lyssavirus rabies, influenza A or yellow fever virus. Mechanistically, associates with the viral replicase, binds viral RNA, and thereby suppresses viral genome amplification that replicates at the endoplasmic reticulum. In addition, restores antiviral signaling by interacting with and sequestering influenza virus protein NS1. The chain is Receptor-transporting protein 4 (Rtp4) from Mus musculus (Mouse).